We begin with the raw amino-acid sequence, 1099 residues long: Carbamoyl phosphate synthase large chain (1099 aa).

Residues 1–402 are carboxyphosphate synthetic domain; the sequence is MPKREDIKRI…ALGKALRSLE (402 aa). 12 residues coordinate ATP: R129, R169, G175, G176, E208, V210, E215, G241, I242, H243, Q285, and E299. The ATP-grasp 1 domain occupies 133–328; the sequence is KETMEKAGLE…IAKVAALLAV (196 aa). 3 residues coordinate Mg(2+): Q285, E299, and N301. Q285, E299, and N301 together coordinate Mn(2+). The interval 403–541 is oligomerization domain; it reads LDAAPKLDLE…STYNGVENEA (139 aa). Residues 542-944 form a carbamoyl phosphate synthetic domain region; it reads VPSDREKIMI…AFAKAQIAAG (403 aa). In terms of domain architecture, ATP-grasp 2 spans 666–857; that stretch reads AKLLKQIGLK…VARIAAKIMV (192 aa). 10 residues coordinate ATP: R702, K741, L743, E748, G773, V774, H775, S776, Q816, and E828. Mg(2+)-binding residues include Q816, E828, and N830. Positions 816, 828, and 830 each coordinate Mn(2+). An MGS-like domain is found at 945–1099; the sequence is NPLPTTGAIL…VRRLTDTWKM (155 aa). The allosteric domain stretch occupies residues 945–1099; it reads NPLPTTGAIL…VRRLTDTWKM (155 aa).

The protein belongs to the CarB family. Composed of two chains; the small (or glutamine) chain promotes the hydrolysis of glutamine to ammonia, which is used by the large (or ammonia) chain to synthesize carbamoyl phosphate. Tetramer of heterodimers (alpha,beta)4. It depends on Mg(2+) as a cofactor. Requires Mn(2+) as cofactor.

The enzyme catalyses hydrogencarbonate + L-glutamine + 2 ATP + H2O = carbamoyl phosphate + L-glutamate + 2 ADP + phosphate + 2 H(+). It catalyses the reaction hydrogencarbonate + NH4(+) + 2 ATP = carbamoyl phosphate + 2 ADP + phosphate + 2 H(+). It participates in amino-acid biosynthesis; L-arginine biosynthesis; carbamoyl phosphate from bicarbonate: step 1/1. It functions in the pathway pyrimidine metabolism; UMP biosynthesis via de novo pathway; (S)-dihydroorotate from bicarbonate: step 1/3. Functionally, large subunit of the glutamine-dependent carbamoyl phosphate synthetase (CPSase). CPSase catalyzes the formation of carbamoyl phosphate from the ammonia moiety of glutamine, carbonate, and phosphate donated by ATP, constituting the first step of 2 biosynthetic pathways, one leading to arginine and/or urea and the other to pyrimidine nucleotides. The large subunit (synthetase) binds the substrates ammonia (free or transferred from glutamine from the small subunit), hydrogencarbonate and ATP and carries out an ATP-coupled ligase reaction, activating hydrogencarbonate by forming carboxy phosphate which reacts with ammonia to form carbamoyl phosphate. The chain is Carbamoyl phosphate synthase large chain from Thermotoga petrophila (strain ATCC BAA-488 / DSM 13995 / JCM 10881 / RKU-1).